Consider the following 330-residue polypeptide: Malate dehydrogenase (330 aa).

Position 15 to 21 (15 to 21 (GGTGQIA)) interacts with NAD(+). Arg96 and Arg102 together coordinate substrate. Residues Asn109, Gln116, and 133 to 135 (VGN) contribute to the NAD(+) site. Residues Asn135 and Arg166 each contribute to the substrate site. His191 serves as the catalytic Proton acceptor.

This sequence belongs to the LDH/MDH superfamily. MDH type 2 family.

It carries out the reaction (S)-malate + NAD(+) = oxaloacetate + NADH + H(+). In terms of biological role, catalyzes the reversible oxidation of malate to oxaloacetate. The sequence is that of Malate dehydrogenase from Chlamydia caviae (strain ATCC VR-813 / DSM 19441 / 03DC25 / GPIC) (Chlamydophila caviae).